We begin with the raw amino-acid sequence, 352 residues long: B1 bradykinin receptor (352 aa).

Topologically, residues 1–41 are extracellular; sequence MASWPPLELQSSNQSQLFPQNATACDNAPEAWDLLHRVLPT. N-linked (GlcNAc...) asparagine glycans are attached at residues N13 and N21. Residues 42–62 form a helical membrane-spanning segment; that stretch reads FIISICSFGLLGNLFVLLVFL. At 63 to 72 the chain is on the cytoplasmic side; it reads LPRRRLNVAE. Residues 73–93 traverse the membrane as a helical segment; sequence IYLANLAASDLVFVLGLPFWA. Residues 94–110 are Extracellular-facing; sequence ENIWNQFNWPFGALLCR. Cysteines 109 and 188 form a disulfide. The helical transmembrane segment at 111 to 131 threads the bilayer; that stretch reads GINGVIKANLFISIFLVVAIS. The Cytoplasmic portion of the chain corresponds to 132 to 153; it reads QDRYCLLVHPMASRRRQRRRQA. The helical transmembrane segment at 154-174 threads the bilayer; sequence RVTCVLIWVVGGLLSIPTFLL. Residues 175 to 206 are Extracellular-facing; that stretch reads RSIQAVPDLNITACILLLPHEAWHFARIVELN. N-linked (GlcNAc...) asparagine glycosylation occurs at N184. Residues 207–227 traverse the membrane as a helical segment; the sequence is ILAFLLPLAAIVFFNYHILAS. At 228-250 the chain is on the cytoplasmic side; it reads LRGREEVSRTRCGGRKDSKTTAL. The helical transmembrane segment at 251-271 threads the bilayer; that stretch reads ILTLVVAFLVCWAPYHFFAFL. At 272–294 the chain is on the extracellular side; that stretch reads EFLFQVQAIRSCFWEDFIDLGLQ. The chain crosses the membrane as a helical span at residues 295 to 315; it reads LANFLAFTNSSLNPVIYVFVG. The Cytoplasmic segment spans residues 316–352; sequence RLFRTKVWELYKQCTPKSLAPISSSHRKEIFQLFWRN. A lipid anchor (S-palmitoyl cysteine) is attached at C329.

Belongs to the G-protein coupled receptor 1 family. Bradykinin receptor subfamily. BDKRB1 sub-subfamily.

The protein resides in the cell membrane. Functionally, this is a receptor for bradykinin. Could be a factor in chronic pain and inflammation. In Chlorocebus pygerythrus (Vervet monkey), this protein is B1 bradykinin receptor (BDKRB1).